A 23-amino-acid polypeptide reads, in one-letter code: NADH-ubiquinone oxidoreductase 29 kDa subunit (23 aa).

In terms of assembly, complex I is composed of about 45 different subunits.

The protein resides in the mitochondrion inner membrane. The catalysed reaction is a ubiquinone + NADH + 5 H(+)(in) = a ubiquinol + NAD(+) + 4 H(+)(out). Functionally, transfer of electrons from NADH to the respiratory chain. The immediate electron acceptor for the enzyme is believed to be ubiquinone. The sequence is that of NADH-ubiquinone oxidoreductase 29 kDa subunit from Solanum tuberosum (Potato).